The following is a 363-amino-acid chain: Neutral protease 2 homolog MEP7 (363 aa).

Positions 1 to 19 (MLLCSMVAALAALATPAFS) are cleaved as a signal peptide. Positions 20–181 (CALPHLDLPE…ARAIQPLDRR (162 aa)) are excised as a propeptide. Intrachain disulfides connect C187-C259 and C266-C284. H308 contributes to the Zn(2+) binding site. Residue E309 is part of the active site. Residues H312 and D323 each contribute to the Zn(2+) site.

The protein belongs to the peptidase M35 family. It depends on Zn(2+) as a cofactor.

It is found in the secreted. The enzyme catalyses Preferential cleavage of bonds with hydrophobic residues in P1'. Also 3-Asn-|-Gln-4 and 8-Gly-|-Ser-9 bonds in insulin B chain.. In terms of biological role, secreted metalloproteinase that allows assimilation of proteinaceous substrates. Shows high activities on basic nuclear substrates such as histone and protamine. May be involved in virulence. This is Neutral protease 2 homolog MEP7 (MEP7) from Coccidioides posadasii (strain C735) (Valley fever fungus).